Consider the following 153-residue polypeptide: Probable histone H2A.2 (153 aa).

2 disordered regions span residues 1–24 and 127–153; these read MDAS…KKSV and KKTE…PKKA. Over residues 127–141 the composition is skewed to basic and acidic residues; the sequence is KKTERSNTVSKEPKS. Positions 142-153 are enriched in basic residues; the sequence is PKPKAGKSPKKA. Positions 149–152 match the SPKK motif motif; it reads SPKK.

The protein belongs to the histone H2A family. As to quaternary structure, the nucleosome is a histone octamer containing two molecules each of H2A, H2B, H3 and H4 assembled in one H3-H4 heterotetramer and two H2A-H2B heterodimers. The octamer wraps approximately 147 bp of DNA.

It localises to the nucleus. The protein localises to the chromosome. Its function is as follows. Core component of nucleosome. Nucleosomes wrap and compact DNA into chromatin, limiting DNA accessibility to the cellular machineries which require DNA as a template. Histones thereby play a central role in transcription regulation, DNA repair, DNA replication and chromosomal stability. DNA accessibility is regulated via a complex set of post-translational modifications of histones, also called histone code, and nucleosome remodeling. In Medicago truncatula (Barrel medic), this protein is Probable histone H2A.2.